A 69-amino-acid polypeptide reads, in one-letter code: Cytochrome b-c1 complex subunit 6 (69 aa).

Intrachain disulfides connect cysteine 17–cysteine 59 and cysteine 31–cysteine 45.

It belongs to the UQCRH/QCR6 family. In terms of assembly, component of the ubiquinol-cytochrome c oxidoreductase (cytochrome b-c1 complex, complex III, CIII), a multisubunit enzyme composed of 3 respiratory subunits cytochrome b, cytochrome c1 and Rieske protein, 2 core protein subunits, and additional low-molecular weight protein subunits. The complex exists as an obligatory dimer and forms supercomplexes (SCs) in the inner mitochondrial membrane with cytochrome c oxidase (complex IV, CIV).

It localises to the mitochondrion inner membrane. Its function is as follows. Component of the ubiquinol-cytochrome c oxidoreductase, a multisubunit transmembrane complex that is part of the mitochondrial electron transport chain which drives oxidative phosphorylation. The respiratory chain contains 3 multisubunit complexes succinate dehydrogenase (complex II, CII), ubiquinol-cytochrome c oxidoreductase (cytochrome b-c1 complex, complex III, CIII) and cytochrome c oxidase (complex IV, CIV), that cooperate to transfer electrons derived from NADH and succinate to molecular oxygen, creating an electrochemical gradient over the inner membrane that drives transmembrane transport and the ATP synthase. The cytochrome b-c1 complex catalyzes electron transfer from ubiquinol to cytochrome c, linking this redox reaction to translocation of protons across the mitochondrial inner membrane, with protons being carried across the membrane as hydrogens on the quinol. In the process called Q cycle, 2 protons are consumed from the matrix, 4 protons are released into the intermembrane space and 2 electrons are passed to cytochrome c. In Solanum tuberosum (Potato), this protein is Cytochrome b-c1 complex subunit 6.